A 338-amino-acid polypeptide reads, in one-letter code: Tryptophan--tRNA ligase (338 aa).

Residues 11 to 13 (QPS) and 19 to 20 (GN) contribute to the ATP site. The 'HIGH' region motif lies at 12–20 (PSGELSIGN). L-tryptophan is bound at residue aspartate 135. ATP is bound by residues 147–149 (GSD), valine 189, and 198–202 (KMSKS). The short motif at 198-202 (KMSKS) is the 'KMSKS' region element.

It belongs to the class-I aminoacyl-tRNA synthetase family. In terms of assembly, homodimer.

Its subcellular location is the cytoplasm. It carries out the reaction tRNA(Trp) + L-tryptophan + ATP = L-tryptophyl-tRNA(Trp) + AMP + diphosphate + H(+). Its function is as follows. Catalyzes the attachment of tryptophan to tRNA(Trp). The sequence is that of Tryptophan--tRNA ligase from Vibrio vulnificus (strain CMCP6).